The following is an 801-amino-acid chain: Na(+)/H(+) antiporter subunit A (801 aa).

Helical transmembrane passes span 4 to 21, 28 to 50, 80 to 102, 109 to 128, 132 to 154, 166 to 188, 203 to 222, 229 to 251, 266 to 288, 301 to 323, 338 to 360, 372 to 394, 428 to 450, 471 to 493, 526 to 548, 594 to 616, 626 to 647, 654 to 671, 676 to 698, 710 to 732, and 772 to 789; these read LHLA…IPFL, VHTG…PMIR, GLLF…IFYL, LGPF…GVVL, VMVL…GYWY, SLLI…YLIT, IAGH…GAFT, FYIW…HSAT, IFAF…MVWG, ILAF…SAAA, AAIF…VGII, LGGL…FSMA, VLFP…KLLF, VGML…FPNI, GVTT…YLSL, YLLY…KGGF, IGVY…TVFA, IIAL…FVIF, LALT…FYHL, FRMT…GIAS, and MFEI…YSMI.

This sequence belongs to the CPA3 antiporters (TC 2.A.63) subunit A family. In terms of assembly, forms a heterooligomeric complex that consists of seven subunits: MrpA, MrpB, MrpC, MrpD, MrpE, MrpF and MrpG.

Its subcellular location is the cell membrane. Mrp complex is a Na(+)/H(+) antiporter that is considered to be the major Na(+) excretion system in B.subtilis. Has a major role in Na(+) resistance and a minor role in Na(+)- and K(+)-dependent pH homeostasis as compared to TetB. MrpA may be the actual Na(+)/H(+) antiporter, although the six other Mrp proteins are all required for Na(+)/H(+) antiport activity and Na(+) resistance. MrpA is required for initiation of sporulation when external Na(+) concentration increases. Also transports Li(+) but not K(+), Ca(2+) or Mg(2+). This is Na(+)/H(+) antiporter subunit A (mrpA) from Bacillus subtilis (strain 168).